The sequence spans 152 residues: Protein-export protein SecB (152 aa).

Belongs to the SecB family. Homotetramer, a dimer of dimers. One homotetramer interacts with 1 SecA dimer.

The protein localises to the cytoplasm. Its function is as follows. One of the proteins required for the normal export of preproteins out of the cell cytoplasm. It is a molecular chaperone that binds to a subset of precursor proteins, maintaining them in a translocation-competent state. It also specifically binds to its receptor SecA. This Rickettsia conorii (strain ATCC VR-613 / Malish 7) protein is Protein-export protein SecB.